Reading from the N-terminus, the 280-residue chain is F-box only protein 27 (280 aa).

Positions 20 to 67 constitute an F-box domain; sequence VLDLSRLPPELLLLVLSHVPPRTLLMHCRRVCRAWRALVDGQALWLLL. The region spanning 101 to 277 is the FBA domain; it reads FCALRPLGRN…VTNSSVIIRV (177 aa).

Part of a SCF (SKP1-cullin-F-box) protein ligase complex. Interacts with SKP1 and CUL1. As to expression, detected in brain, heart and muscle.

Substrate-recognition component of the SCF (SKP1-CUL1-F-box protein)-type E3 ubiquitin ligase complex. Able to recognize and bind complex-type oligosaccharides. In Mus musculus (Mouse), this protein is F-box only protein 27 (Fbxo27).